Reading from the N-terminus, the 137-residue chain is Large ribosomal subunit protein uL16 (137 aa).

The protein belongs to the universal ribosomal protein uL16 family. Part of the 50S ribosomal subunit.

Its function is as follows. Binds 23S rRNA and is also seen to make contacts with the A and possibly P site tRNAs. The chain is Large ribosomal subunit protein uL16 from Mycoplasma capricolum subsp. capricolum (strain California kid / ATCC 27343 / NCTC 10154).